The primary structure comprises 268 residues: Imidazole glycerol phosphate synthase subunit HisF (268 aa).

Residues D12 and D131 contribute to the active site.

This sequence belongs to the HisA/HisF family. Heterodimer of HisH and HisF.

The protein localises to the cytoplasm. It carries out the reaction 5-[(5-phospho-1-deoxy-D-ribulos-1-ylimino)methylamino]-1-(5-phospho-beta-D-ribosyl)imidazole-4-carboxamide + L-glutamine = D-erythro-1-(imidazol-4-yl)glycerol 3-phosphate + 5-amino-1-(5-phospho-beta-D-ribosyl)imidazole-4-carboxamide + L-glutamate + H(+). Its pathway is amino-acid biosynthesis; L-histidine biosynthesis; L-histidine from 5-phospho-alpha-D-ribose 1-diphosphate: step 5/9. In terms of biological role, IGPS catalyzes the conversion of PRFAR and glutamine to IGP, AICAR and glutamate. The HisF subunit catalyzes the cyclization activity that produces IGP and AICAR from PRFAR using the ammonia provided by the HisH subunit. This is Imidazole glycerol phosphate synthase subunit HisF from Salinibacter ruber (strain DSM 13855 / M31).